Reading from the N-terminus, the 102-residue chain is Small ribosomal subunit protein uS14 (102 aa).

The protein belongs to the universal ribosomal protein uS14 family. Part of the 30S ribosomal subunit. Contacts proteins S3 and S10.

Functionally, binds 16S rRNA, required for the assembly of 30S particles and may also be responsible for determining the conformation of the 16S rRNA at the A site. The polypeptide is Small ribosomal subunit protein uS14 (Wolbachia pipientis wMel).